Here is a 393-residue protein sequence, read N- to C-terminus: Pyruvate dehydrogenase E1 component subunit alpha-2, mitochondrial (393 aa).

A mitochondrion-targeting transit peptide spans 1-28; it reads MALSRLSSRSNTFLKPAITALPSSIRRH. Residues histidine 94, tyrosine 120, arginine 121, glycine 169, valine 171, aspartate 200, glycine 201, alanine 202, asparagine 229, and tyrosine 231 each contribute to the pyruvate site. Residues tyrosine 120, arginine 121, glycine 169, valine 171, aspartate 200, glycine 201, alanine 202, and asparagine 229 each coordinate thiamine diphosphate. Aspartate 200 contacts Mg(2+). The Mg(2+) site is built by asparagine 229 and tyrosine 231. Histidine 295 serves as a coordination point for thiamine diphosphate.

In terms of assembly, tetramer of 2 alpha and 2 beta subunits. The cofactor is thiamine diphosphate. Mg(2+) serves as cofactor.

It is found in the mitochondrion matrix. It catalyses the reaction N(6)-[(R)-lipoyl]-L-lysyl-[protein] + pyruvate + H(+) = N(6)-[(R)-S(8)-acetyldihydrolipoyl]-L-lysyl-[protein] + CO2. With respect to regulation, E1 activity is regulated by phosphorylation (inactivation) and dephosphorylation (activation) of the alpha subunit. Functionally, the pyruvate dehydrogenase complex catalyzes the overall conversion of pyruvate to acetyl-CoA and CO(2). It contains multiple copies of three enzymatic components: pyruvate dehydrogenase (E1), dihydrolipoamide acetyltransferase (E2) and lipoamide dehydrogenase (E3). This chain is Pyruvate dehydrogenase E1 component subunit alpha-2, mitochondrial (IAR4), found in Arabidopsis thaliana (Mouse-ear cress).